The following is a 542-amino-acid chain: Putative cysteine ligase BshC (542 aa).

A coiled-coil region spans residues 458–487; the sequence is VAKNAAIIQAQIEFLQQTLERALLSKHEVE.

It belongs to the BshC family.

In terms of biological role, involved in bacillithiol (BSH) biosynthesis. May catalyze the last step of the pathway, the addition of cysteine to glucosamine malate (GlcN-Mal) to generate BSH. This chain is Putative cysteine ligase BshC, found in Geobacillus thermodenitrificans (strain NG80-2).